We begin with the raw amino-acid sequence, 322 residues long: uncharacterized protein (322 aa).

Residues 1–63 (MFKIRKRSVP…DEASSSDSHY (63 aa)) form a disordered region. Residues 34 to 49 (FVDDHGKPIAEYRDFP) are compositionally biased toward basic and acidic residues. The segment at 245 to 274 (WKVDRICTYYINRPDKCTRGDNCRFKHDDV) adopts a C3H1-type zinc-finger fold. Residues 278-322 (HRQKEIQSSRNQSWHHRTSSHKYSSENSDHRGYRRHRSRSPHARQ) are disordered. Positions 309–322 (GYRRHRSRSPHARQ) are enriched in basic residues.

This is an uncharacterized protein from Caenorhabditis elegans.